The chain runs to 510 residues: NAD(P)H-quinone oxidoreductase subunit 2, chloroplastic (510 aa).

13 helical membrane-spanning segments follow: residues 28–48 (DGSF…LLII), 57–77 (IPWL…TLLF), 99–119 (IFQF…VEYI), 124–144 (MALT…MFLC), 149–169 (LITI…LSGY), 183–203 (YLLM…WLYG), 227–247 (PGIS…LSPA), 295–315 (WHLL…LIAI), 323–343 (MLAY…IVGD), 354–374 (YMLF…LFGL), 395–415 (ALSL…AGFF), 418–438 (LYLF…IGLL), and 484–504 (MIVC…IIAI).

Belongs to the complex I subunit 2 family. As to quaternary structure, NDH is composed of at least 16 different subunits, 5 of which are encoded in the nucleus.

The protein resides in the plastid. It is found in the chloroplast thylakoid membrane. It carries out the reaction a plastoquinone + NADH + (n+1) H(+)(in) = a plastoquinol + NAD(+) + n H(+)(out). The catalysed reaction is a plastoquinone + NADPH + (n+1) H(+)(in) = a plastoquinol + NADP(+) + n H(+)(out). Its function is as follows. NDH shuttles electrons from NAD(P)H:plastoquinone, via FMN and iron-sulfur (Fe-S) centers, to quinones in the photosynthetic chain and possibly in a chloroplast respiratory chain. The immediate electron acceptor for the enzyme in this species is believed to be plastoquinone. Couples the redox reaction to proton translocation, and thus conserves the redox energy in a proton gradient. This chain is NAD(P)H-quinone oxidoreductase subunit 2, chloroplastic, found in Silene latifolia (White campion).